We begin with the raw amino-acid sequence, 102 residues long: Urease subunit beta (102 aa).

It belongs to the urease beta subunit family. In terms of assembly, heterotrimer of UreA (gamma), UreB (beta) and UreC (alpha) subunits. Three heterotrimers associate to form the active enzyme.

It localises to the cytoplasm. The enzyme catalyses urea + 2 H2O + H(+) = hydrogencarbonate + 2 NH4(+). It participates in nitrogen metabolism; urea degradation; CO(2) and NH(3) from urea (urease route): step 1/1. This is Urease subunit beta from Acinetobacter baumannii (strain ACICU).